Reading from the N-terminus, the 682-residue chain is ATP-dependent zinc metalloprotease FtsH (682 aa).

Over 1–7 (MKQSHKT) the chain is Cytoplasmic. A helical transmembrane segment spans residues 8–28 (ILLWALLIFLFVMIYNLISDG). Residues 29 to 138 (TSGEETLDTT…YEVKAKEEST (110 aa)) lie on the Periplasmic side of the membrane. Residues 139–159 (FWQSLLISWLPMLLLFALFFF) traverse the membrane as a helical segment. Topologically, residues 160–682 (FMRQLQAGGG…SGTDPEPEPA (523 aa)) are cytoplasmic. 232-239 (GPPGTGKT) is a binding site for ATP. H454 is a Zn(2+) binding site. E455 is a catalytic residue. Zn(2+)-binding residues include H458 and D531. A disordered region spans residues 638–682 (LSRPAVVSKPSADAESSVDEDEREARPALFPPLGKSGTDPEPEPA).

It in the central section; belongs to the AAA ATPase family. The protein in the C-terminal section; belongs to the peptidase M41 family. In terms of assembly, homohexamer. It depends on Zn(2+) as a cofactor.

The protein resides in the cell inner membrane. In terms of biological role, acts as a processive, ATP-dependent zinc metallopeptidase for both cytoplasmic and membrane proteins. Plays a role in the quality control of integral membrane proteins. This chain is ATP-dependent zinc metalloprotease FtsH, found in Haliangium ochraceum (strain DSM 14365 / JCM 11303 / SMP-2).